Reading from the N-terminus, the 151-residue chain is MNKTVLPTIDNLDHKWYVIDAEGQRLGRLATEVATILRGKNKPTFTPHMDTGDFVIIINAEKIEVTGRKREQKLYRRHSGRPGGMKEETFEKLQVRLPERIVESAVRGMLPKNSLGRKLFTKLKVYAGPSHPHAAQQPETLVINTIPAGAN.

Belongs to the universal ribosomal protein uL13 family. In terms of assembly, part of the 50S ribosomal subunit.

In terms of biological role, this protein is one of the early assembly proteins of the 50S ribosomal subunit, although it is not seen to bind rRNA by itself. It is important during the early stages of 50S assembly. This Synechocystis sp. (strain ATCC 27184 / PCC 6803 / Kazusa) protein is Large ribosomal subunit protein uL13.